A 165-amino-acid polypeptide reads, in one-letter code: MARKVIALAFLLLLTISLSKSNAARVIKYNGGGSGGGGGGGGGGGGGGNGSGSGSGYGYGYGKAGGQSGGGQGSGGGGGGGGGGGNGSGSGSGYGYGYGQGNGGAQGQGSGGGGGGGGGGGGGGSGQGSGSGYGYGYGKGGGGGGGGGGGGGGGGGGSGYVGKHE.

Positions 1–23 are cleaved as a signal peptide; the sequence is MARKVIALAFLLLLTISLSKSNA. R2; Tyr-rich repeat units follow at residues 56-62 and 93-99; these read GYGYGYG. Positions 105–125 are disordered; that stretch reads AQGQGSGGGGGGGGGGGGGGS. The stretch at 132 to 138 is one R2; Tyr-rich repeat; it reads GYGYGYG. The segment at 146–165 is disordered; the sequence is GGGGGGGGGGGGSGYVGKHE.

It localises to the secreted. The protein resides in the cell wall. In terms of biological role, responsible for plasticity of the cell wall. In Oryza sativa subsp. indica (Rice), this protein is Putative glycine-rich cell wall structural protein 1 (GRP-1).